An 872-amino-acid chain; its full sequence is Rho guanine nucleotide exchange factor scd1 (872 aa).

The segment at 1–29 is disordered; the sequence is MAYFQDRKTSSRSLPSYINHSTQNLVGPR. A compositionally biased stretch (polar residues) spans 11–25; it reads SRSLPSYINHSTQNL. Residues 82-198 enclose the Calponin-homology (CH) domain; sequence DSIHREALNS…TIELLLKKYE (117 aa). A DH domain is found at 228–402; that stretch reads SGRRVTAELY…VRVANQVNET (175 aa). One can recognise a PH domain in the interval 426–547; that stretch reads SLQYFGQLLV…WMSVLNRLLW (122 aa). 2 disordered regions span residues 553 to 667 and 743 to 765; these read SPKD…STAS and MKSDGSLLPSTKHTSLSSSSTST. Residues 560–584 are compositionally biased toward polar residues; the sequence is AASTPANPVYNRSSSQTSKGYNSSD. Phosphoserine is present on serine 583. The segment covering 599-616 has biased composition (low complexity); the sequence is SPTSISSPSSKSSPFTKT. The span at 617 to 633 shows a compositional bias: basic and acidic residues; it reads TSKDTKSATTTDERPSD. 2 stretches are compositionally biased toward low complexity: residues 645–667 and 748–765; these read TSSLRTSQTTSTIVSNDSSSTAS and SLLPSTKHTSLSSSSTST. Residues 772–859 form the PB1 domain; sequence TTNVKIRLRL…FELMDPVHNK (88 aa).

Scd1, scd2, cdc42, and ras1, in its GTP-bound state, act cooperatively to form a protein complex. Interacts with moe1 and cdc42.

Its subcellular location is the nucleus. It is found in the cytoplasm. Required for mating and morphogenesis. May contain a cryptic binding site for cdc42 that is enhanced by binding Ras. Interacts directly with scd2. Promotes the exchange of cdc42-bound GDP by GTP. Involved in septation and stimulates the elongation of conjugation tubes. The protein is Rho guanine nucleotide exchange factor scd1 (scd1) of Schizosaccharomyces pombe (strain 972 / ATCC 24843) (Fission yeast).